The sequence spans 529 residues: Peptide chain release factor 3 (529 aa).

The region spanning 11-280 (NKRRTFAIIS…GLVKWAPAPM (270 aa)) is the tr-type G domain. GTP contacts are provided by residues 20 to 27 (SHPDAGKT), 88 to 92 (DTPGH), and 142 to 145 (NKLD).

It belongs to the TRAFAC class translation factor GTPase superfamily. Classic translation factor GTPase family. PrfC subfamily.

The protein localises to the cytoplasm. Its function is as follows. Increases the formation of ribosomal termination complexes and stimulates activities of RF-1 and RF-2. It binds guanine nucleotides and has strong preference for UGA stop codons. It may interact directly with the ribosome. The stimulation of RF-1 and RF-2 is significantly reduced by GTP and GDP, but not by GMP. The chain is Peptide chain release factor 3 from Proteus mirabilis (strain HI4320).